Here is a 469-residue protein sequence, read N- to C-terminus: Histone chaperone rtt-106 (469 aa).

Disordered stretches follow at residues 54 to 73 (EEPA…PNGA) and 364 to 469 (MAEQ…EGEE). 2 stretches are compositionally biased toward basic and acidic residues: residues 364–379 (MAEQ…ENAK) and 402–415 (ELER…QRLQ). 2 stretches are compositionally biased toward acidic residues: residues 416–433 (DEED…EGES) and 440–469 (SEEE…EGEE).

This sequence belongs to the RTT106 family. Interacts with histones H3 and H4.

It is found in the nucleus. The protein resides in the chromosome. Functionally, histones H3 and H4 chaperone involved in the nucleosome formation and heterochromatin silencing. Required for the deposition of H3K56ac-carrying H3-H4 complex onto newly-replicated DNA. Plays a role in the transcriptional regulation of the cell-cycle dependent histone genes by creating a repressive structure at the core histone gene promoter. The polypeptide is Histone chaperone rtt-106 (rtt-106) (Neurospora crassa (strain ATCC 24698 / 74-OR23-1A / CBS 708.71 / DSM 1257 / FGSC 987)).